The chain runs to 785 residues: Putative endonuclease MutS2 (785 aa).

Residue 335-342 (GPNTGGKT) participates in ATP binding. The stretch at 513 to 586 (TAEHNEVDTM…AEKVKAAMKE (74 aa)) forms a coiled coil. Residues 636-785 (KRDFKPGDEV…GSGVTVVELK (150 aa)) form a partially complements a deletion for mitomycin C (MMC) resistance and for chromosomal DNA transformation region. The segment at 641 to 681 (PGDEVKVLTFGQKGTLLEKTGGNEWNVQIGILKMKVKEKDL) is KOW region. The Smr domain occupies 710 to 785 (LDLRGERYEN…GSGVTVVELK (76 aa)).

It belongs to the DNA mismatch repair MutS family. MutS2 subfamily. Binds to ribosomes as a homodimer. Binds to stalled/collided disomes, association is greater in (ribosome-targeted) antibiotic-treated cells (with increased stalling at specific mRNA sites). The clamp domain of one monomer binds the A-site finger, the 23S rRNA of the central protuberance and ribosomal protein uL5 of the leading (stalled) ribosome, while the other monomer binds in a gap between the ribosomal central protuberance and the L1 stalk of the leading ribosome.

It localises to the cytoplasm. Acts as a ribosome collision sensor splitting the ribosome into its 2 subunits. Detects stalled/collided disomes (pairs of ribosomes where the leading ribosome is stalled and a second ribosome has collided with it) which it binds and splits, by an ATP-hydrolysis driven conformational change. Does not seem to have endoribonuclease activity (in the context of ribosome stalling). Acts upstream of the ribosome quality control system (RQC), a ribosome-associated complex that mediates the extraction of incompletely synthesized nascent chains from stalled ribosomes and their subsequent degradation, probably generates substrates for RQC. In terms of biological role, does not seem to be involved in mismatch repair or in the prevention of interspecific recombination during DNA transformation. Might be involved in homologous recombination. Putative endonuclease that may be involved in the suppression of homologous recombination and may therefore have a key role in the control of bacterial genetic diversity. This Bacillus subtilis (strain 168) protein is Putative endonuclease MutS2.